A 343-amino-acid chain; its full sequence is MGSADERRFEVLRAIVADFVATQEPIGSKSLVERHNLGVSSATVRNDMAVLEAEGYITQPHTSSGRVPTEKGYREFVDRLEDVKPLSSAERRAIQSFLESGVDLDDVLRRAVRLLAQLTRQVAVVQYPTLSTSTVRHLEVIALTPARLLMVVITDSGRVDQRIVELGDVIDDHQLAQLREILGQALEGKKLSAASVAVADLASQLGGAGGLGDAVGRAATVLLESLVEHTEERLLLGGTANLTRNAADFGGSLRSILEALEEQVVVLRLLAAQQEAGKVTVRIGHETASEQMVGTSMVSTAYGTAHTVYGGMGVVGPTRMDYPGTIASVAAVALYIGDVLGAR.

Belongs to the HrcA family.

Negative regulator of class I heat shock genes (grpE-dnaK-dnaJ and groELS operons). Prevents heat-shock induction of these operons. The sequence is that of Heat-inducible transcription repressor HrcA from Mycobacterium tuberculosis (strain ATCC 25177 / H37Ra).